Consider the following 300-residue polypeptide: Ornithine carbamoyltransferase (300 aa).

Residues 50–53 (STRT), Q77, R101, and 128–131 (HPCQ) contribute to the carbamoyl phosphate site. Residues N159, D219, and 223–224 (SM) contribute to the L-ornithine site. Carbamoyl phosphate-binding positions include 257-258 (CL) and R285.

Belongs to the aspartate/ornithine carbamoyltransferase superfamily. OTCase family.

The protein localises to the cytoplasm. It catalyses the reaction carbamoyl phosphate + L-ornithine = L-citrulline + phosphate + H(+). Its pathway is amino-acid degradation; L-arginine degradation via ADI pathway; carbamoyl phosphate from L-arginine: step 2/2. Reversibly catalyzes the transfer of the carbamoyl group from carbamoyl phosphate (CP) to the N(epsilon) atom of ornithine (ORN) to produce L-citrulline. This is Ornithine carbamoyltransferase from Haloquadratum walsbyi (strain DSM 16790 / HBSQ001).